The following is a 127-amino-acid chain: Anti-adapter protein IraD (127 aa).

It belongs to the GpW/Gp25 family. IraD subfamily. In terms of assembly, interacts with RssB.

The protein localises to the cytoplasm. Functionally, inhibits RpoS proteolysis by regulating RssB activity, thereby increasing the stability of the sigma stress factor RpoS during oxidative stress. Its effect on RpoS stability is due to its interaction with RssB, which probably blocks the interaction of RssB with RpoS, and the consequent delivery of the RssB-RpoS complex to the ClpXP protein degradation pathway. The sequence is that of Anti-adapter protein IraD from Escherichia coli O6:H1 (strain CFT073 / ATCC 700928 / UPEC).